The primary structure comprises 2208 residues: RNA-directed RNA polymerase L (2208 aa).

The interval Lys26 to Cys284 is endonuclease. Mn(2+) contacts are provided by Glu51, Asp89, and Glu102. Lys115 is an active-site residue. Positions Cys1172–Val1370 constitute a RdRp catalytic domain. Asp1330 serves as a coordination point for Mg(2+).

The protein belongs to the Bunyavirales RNA polymerase family. As to quaternary structure, homomultimer; the oligomeric structure is essential for the polymerase activity. Interacts with nucleoprotein N. Interacts with protein Z; this interaction inhibits viral transcription and replication, Z partially blocks the product exit tunnel for the releasing nascent RNA product. It depends on Mn(2+) as a cofactor. Mg(2+) serves as cofactor.

Its subcellular location is the virion. It localises to the host cytoplasm. The catalysed reaction is RNA(n) + a ribonucleoside 5'-triphosphate = RNA(n+1) + diphosphate. Its function is as follows. RNA-dependent RNA polymerase, which is responsible for the replication and transcription of the viral RNA genome using antigenomic RNA as an intermediate. During transcription, synthesizes subgenomic RNAs and assures their capping by a cap-snatching mechanism, which involves the endonuclease activity cleaving the host capped pre-mRNAs. These short capped RNAs are then used as primers for viral transcription. The 3'-end of subgenomic mRNAs molecules are heterogeneous and not polyadenylated. The replicase function is to direct synthesis of antigenomic and genomic RNA which are encapsidated and non capped. As a consequence of the use of the same enzyme for both transcription and replication, these mechanisms need to be well coordinated. These processes may be regulated by proteins N and Z in a dose-dependent manner. Z protein inhibits the viral polymerase L und thus the viral transcription and RNA synthesis. The protein is RNA-directed RNA polymerase L of Hylaeamys megacephalus (Large-headed rice rat).